A 698-amino-acid polypeptide reads, in one-letter code: Long-chain-fatty-acid--CoA ligase 1 (698 aa).

Methionine 1 bears the N-acetylmethionine mark. Tyrosine 9 bears the 3'-nitrotyrosine mark. The helical; Signal-anchor for type III membrane protein transmembrane segment at 25 to 45 (LPTNTLMGFGAFAALTTFWYA) threads the bilayer. Topologically, residues 46–698 (TRPKPLKPPC…IDDLYSTIKV (653 aa)) are cytoplasmic. Phosphotyrosine is present on tyrosine 84. Serine 135 is a glycosylation site (O-linked (GlcNAc) serine). N6-acetyllysine occurs at positions 207, 356, and 386. Serine 620 carries the phosphoserine modification. An N6-acetyllysine modification is found at lysine 632.

Belongs to the ATP-dependent AMP-binding enzyme family. Mg(2+) is required as a cofactor. Highly expressed in liver, heart, skeletal muscle, kidney and erythroid cells, and to a lesser extent in brain, lung, placenta and pancreas.

The protein resides in the mitochondrion outer membrane. The protein localises to the peroxisome membrane. It localises to the microsome membrane. It is found in the endoplasmic reticulum membrane. It catalyses the reaction a long-chain fatty acid + ATP + CoA = a long-chain fatty acyl-CoA + AMP + diphosphate. The enzyme catalyses (5Z,8Z,11Z,14Z)-eicosatetraenoate + ATP + CoA = (5Z,8Z,11Z,14Z)-eicosatetraenoyl-CoA + AMP + diphosphate. The catalysed reaction is 3,7,11,15-tetramethylhexadecanoate + ATP + CoA = phytanoyl-CoA + AMP + diphosphate. It carries out the reaction hexadecanoate + ATP + CoA = hexadecanoyl-CoA + AMP + diphosphate. It catalyses the reaction (E)-hexadec-2-enoate + ATP + CoA = (2E)-hexadecenoyl-CoA + AMP + diphosphate. The enzyme catalyses 2,6,10,14-tetramethylpentadecanoate + ATP + CoA = pristanoyl-CoA + AMP + diphosphate. The catalysed reaction is 14,15-epoxy-(5Z,8Z,11Z)-eicosatrienoate + ATP + CoA = 14,15-epoxy-(5Z,8Z,11Z)-eicosatrienoyl-CoA + AMP + diphosphate. It carries out the reaction 5-hydroxy-(6E,8Z,11Z,14Z)-eicosatetraenoate + ATP + CoA = 5-hydroxy-(6E,8Z,11Z,14Z)-eicosatetraenoyl-CoA + AMP + diphosphate. It catalyses the reaction 12-hydroxy-(5Z,8Z,10E,14Z)-eicosatetraenoate + ATP + CoA = 12-hydroxy-(5Z,8Z,10E,14Z)-eicosatetraenoyl-CoA + AMP + diphosphate. The enzyme catalyses 15-hydroxy-(5Z,8Z,11Z,13E)-eicosatetraenoate + ATP + CoA = 15-hydroxy-(5Z,8Z,11Z,13E)-eicosatetraenoyl-CoA + AMP + diphosphate. The catalysed reaction is (9Z)-octadecenoate + ATP + CoA = (9Z)-octadecenoyl-CoA + AMP + diphosphate. Inhibited at high temperature and by arachidonate. Functionally, catalyzes the conversion of long-chain fatty acids to their active form acyl-CoAs for both synthesis of cellular lipids, and degradation via beta-oxidation. Preferentially uses palmitoleate, oleate and linoleate. Preferentially activates arachidonate than epoxyeicosatrienoic acids (EETs) or hydroxyeicosatrienoic acids (HETEs). This chain is Long-chain-fatty-acid--CoA ligase 1, found in Homo sapiens (Human).